Here is a 402-residue protein sequence, read N- to C-terminus: 1-deoxy-D-xylulose 5-phosphate reductoisomerase (402 aa).

Residues Thr10, Gly11, Ser12, Ile13, Gly36, Asn38, and Asn124 each contribute to the NADPH site. Residue Lys125 participates in 1-deoxy-D-xylulose 5-phosphate binding. An NADPH-binding site is contributed by Glu126. Residue Asp150 coordinates Mn(2+). 1-deoxy-D-xylulose 5-phosphate contacts are provided by Ser151, Glu152, Ser186, and His209. A Mn(2+)-binding site is contributed by Glu152. Gly215 provides a ligand contact to NADPH. 1-deoxy-D-xylulose 5-phosphate contacts are provided by Ser222, Asn227, Lys228, and Glu231. Mn(2+) is bound at residue Glu231.

This sequence belongs to the DXR family. Mg(2+) serves as cofactor. Requires Mn(2+) as cofactor.

The catalysed reaction is 2-C-methyl-D-erythritol 4-phosphate + NADP(+) = 1-deoxy-D-xylulose 5-phosphate + NADPH + H(+). It functions in the pathway isoprenoid biosynthesis; isopentenyl diphosphate biosynthesis via DXP pathway; isopentenyl diphosphate from 1-deoxy-D-xylulose 5-phosphate: step 1/6. In terms of biological role, catalyzes the NADPH-dependent rearrangement and reduction of 1-deoxy-D-xylulose-5-phosphate (DXP) to 2-C-methyl-D-erythritol 4-phosphate (MEP). The chain is 1-deoxy-D-xylulose 5-phosphate reductoisomerase from Vibrio cholerae serotype O1 (strain ATCC 39541 / Classical Ogawa 395 / O395).